Consider the following 445-residue polypeptide: Putative H/ACA ribonucleoprotein complex subunit 4 (445 aa).

Residues 1–32 form a disordered region; that stretch reads MGKKDKRSKLEGDELAEAQQKGSFQLPSSNET. Positions 20-32 are enriched in polar residues; that stretch reads QKGSFQLPSSNET. The Nucleophile role is filled by Asp113. The PUA domain occupies 284 to 359; sequence HKRVVVKDSC…IVAKSKRVIM (76 aa). The segment at 407 to 445 is disordered; that stretch reads TDKVKKEQEDKEDEEEEEAPKKKSKKAAKKEVSSSSDSE.

The protein belongs to the pseudouridine synthase TruB family. In terms of assembly, component of the small nucleolar ribonucleoprotein particle containing H/ACA-type snoRNAs (H/ACA snoRNPs).

Its subcellular location is the nucleus. It localises to the nucleolus. It catalyses the reaction a uridine in RNA = a pseudouridine in RNA. Functionally, plays a central role in ribosomal RNA processing. Probable catalytic subunit of H/ACA small nucleolar ribonucleoprotein (H/ACA snoRNP) complex, which catalyzes pseudouridylation of rRNA. This involves the isomerization of uridine such that the ribose is subsequently attached to C5, instead of the normal N1. Pseudouridine ('psi') residues may serve to stabilize the conformation of rRNAs. The polypeptide is Putative H/ACA ribonucleoprotein complex subunit 4 (Caenorhabditis briggsae).